Consider the following 108-residue polypeptide: Protein FATTY ACID EXPORT 7 (108 aa).

The next 3 helical transmembrane spans lie at 32-52, 55-75, and 85-105; these read ISLVAGGGSAALFYYVYTELP, PVLASSIGIVGSAALTGMMGS, and PAGLVSVVSLVMTGAYLHGLI.

The protein belongs to the TMEM14 family.

Its subcellular location is the membrane. In terms of biological role, may be involved in free fatty acids export. This Arabidopsis thaliana (Mouse-ear cress) protein is Protein FATTY ACID EXPORT 7.